Consider the following 423-residue polypeptide: Serine hydroxymethyltransferase (423 aa).

Residues leucine 118 and 122–124 (GHL) each bind (6S)-5,6,7,8-tetrahydrofolate. Lysine 227 is modified (N6-(pyridoxal phosphate)lysine). 351–353 (SPF) lines the (6S)-5,6,7,8-tetrahydrofolate pocket.

It belongs to the SHMT family. As to quaternary structure, homodimer. Pyridoxal 5'-phosphate serves as cofactor.

The protein localises to the cytoplasm. It carries out the reaction (6R)-5,10-methylene-5,6,7,8-tetrahydrofolate + glycine + H2O = (6S)-5,6,7,8-tetrahydrofolate + L-serine. The protein operates within one-carbon metabolism; tetrahydrofolate interconversion. Its pathway is amino-acid biosynthesis; glycine biosynthesis; glycine from L-serine: step 1/1. Functionally, catalyzes the reversible interconversion of serine and glycine with tetrahydrofolate (THF) serving as the one-carbon carrier. This reaction serves as the major source of one-carbon groups required for the biosynthesis of purines, thymidylate, methionine, and other important biomolecules. Also exhibits THF-independent aldolase activity toward beta-hydroxyamino acids, producing glycine and aldehydes, via a retro-aldol mechanism. The chain is Serine hydroxymethyltransferase from Petrotoga mobilis (strain DSM 10674 / SJ95).